We begin with the raw amino-acid sequence, 544 residues long: Cytochrome P450 monooxygenase tenB (544 aa).

A helical membrane pass occupies residues 13 to 33 (LGYYEKVTGILGVVSIILLFW). The span at 438 to 448 (FDPFRFSRASK) shows a compositional bias: basic and acidic residues. Residues 438–467 (FDPFRFSRASKDDDDDDDDDGRSTSSHTKD) are disordered. Cysteine 486 contributes to the heme binding site.

Belongs to the cytochrome P450 family. The cofactor is heme.

It localises to the membrane. The protein operates within secondary metabolite biosynthesis. In terms of biological role, cytochrome P450 monooxygenase; part of the gene cluster that mediates the biosynthesis of tenellin-type 2-pyridones, iron-chelating compounds involved in iron stress tolerance, competition with the natural competitor fungus Metarhizium robertsii and insect hosts infection. TenB catalyzes the selective N-hydroxylation of the 2-pyridone nitrogen of yield tellinin and 15-hydroxytellenin (15-HT), respectively. The pathway begins with the assembly of the polyketide-amino acid backbone by the hybrid PKS-NRPS tenS with the help of the enoyl reductase tenC. These enzymes catalyze the synthesis of the pyrrolidine-2-dione intermediates pretellinin A, 11-hydropretellenin A, 12-hydropretellenin A, 13-hydropretellenin A, 14-hydropretellenin A, 12-oxopretellenin A and prototellinin D. The cytochrome P450 monooxygenase tenA then catalyzes an oxidative ring expansion of pretenellin A and 14-hydropretellenin A to form the 2-pyridone core, leading to pretenellin B and pyridovericin, respectively. The cytochrome P450 monooxygenase tenB is then required for the selective N-hydroxylation of the 2-pyridone nitrogen of yield tellinin and 15-hydroxytellenin (15-HT), respectively. The UDP-glucosyltransferase GT1 and the methyltransferase MT1, located outside the tenS gene cluster, contribute to the stepwise glycosylation and methylation of 15-HT to obtain the glycoside pyridovericin-N-O-(4-O-methyl-beta-D-glucopyranoside) (PMGP). Additional related compounds such as 1-O-methyl-15-HT, (8Z)-1-O-methyl-15-HT, and O-methyltenellin A are also produced but the enzymes involved in their biosynthesis have still to be determined. The chain is Cytochrome P450 monooxygenase tenB from Beauveria bassiana (strain ARSEF 2860) (White muscardine disease fungus).